The primary structure comprises 169 residues: Peptidyl-prolyl cis-trans isomerase (169 aa).

One can recognise a PPIase cyclophilin-type domain in the interval 5 to 168 (FFDMTIGGQP…SEVKIAKCGQ (164 aa)).

This sequence belongs to the cyclophilin-type PPIase family.

It localises to the cytoplasm. It catalyses the reaction [protein]-peptidylproline (omega=180) = [protein]-peptidylproline (omega=0). Binds cyclosporin A (CsA). CsA mediates some of its effects via an inhibitory action on PPIase. In terms of biological role, PPIases accelerate the folding of proteins. It catalyzes the cis-trans isomerization of proline imidic peptide bonds in oligopeptides. The sequence is that of Peptidyl-prolyl cis-trans isomerase from Unspecified eudicot DB-1992.